The chain runs to 1025 residues: Fanconi-associated nuclease 1 (1025 aa).

Residues 40 to 68 (KLACPICSKMVPRYDLNWHLDEKCANNDN) form a UBZ4-type zinc finger. Positions 43, 46, 58, and 63 each coordinate Zn(2+). The segment at 98–120 (TPGKLSPSKASLTPDPSDSAKMG) is disordered. Ser182 is subject to Phosphoserine. Residues 682–704 (VEILQRLHMYEEAVKELESLLSQ) are a coiled coil. 4 residues coordinate Mn(2+): Glu842, Asp968, Glu983, and Val984. The region spanning 903 to 1015 (AESLRAWVAA…GADVEVCHVV (113 aa)) is the VRR-NUC domain.

Belongs to the FAN1 family. As to quaternary structure, interacts with FANCD2 (when monoubiquitinated). Interacts with FANCI, MLH1, MLH3 and PMS2. Mn(2+) serves as cofactor. Mg(2+) is required as a cofactor. Ubiquitinated and degraded during mitotic exit by the APC/C-Cdh1 complex.

The protein localises to the nucleus. It catalyses the reaction Hydrolytically removes 5'-nucleotides successively from the 3'-hydroxy termini of 3'-hydroxy-terminated oligonucleotides.. Nuclease required for the repair of DNA interstrand cross-links (ICL) recruited at sites of DNA damage by monoubiquitinated FANCD2. Specifically involved in repair of ICL-induced DNA breaks by being required for efficient homologous recombination, probably in the resolution of homologous recombination intermediates. Not involved in DNA double-strand breaks resection. Acts as a 5'-3' exonuclease that anchors at a cut end of DNA and cleaves DNA successively at every third nucleotide, allowing to excise an ICL from one strand through flanking incisions. Probably keeps excising with 3'-flap annealing until it reaches and unhooks the ICL. Acts at sites that have a 5'-terminal phosphate anchor at a nick or a 1- or 2-nucleotide flap and is augmented by a 3' flap. Also has endonuclease activity toward 5'-flaps. The sequence is that of Fanconi-associated nuclease 1 (FAN1) from Ailuropoda melanoleuca (Giant panda).